Consider the following 354-residue polypeptide: E2F transcription factor-like E2FF (354 aa).

A DNA-binding region spans residues 21-86 (RKEKSLGVLV…RGKNQYSWKG (66 aa)). The segment at 104 to 143 (ERLGYSSSNNSDKVSNGCEREEPLTLTPDDQENSSSSKMD) is disordered. Residues 108 to 117 (YSSSNNSDKV) show a composition bias toward polar residues. Residues 145–225 (KKEKSLWLLA…TRKPAYRWLG (81 aa)) mediate DNA binding.

The protein belongs to the E2F/DP family. High expression in young cotyledons and leaves, hypocotyls, shoot apical meristem, roots and mature pollen grains, moderate in developing trichomes, flowers and at early stages of developing anthers, and barely detectable in mature leaves. Not detected in primary root meristem, emerging lateral roots, pistils, developing embryos and siliques.

The protein localises to the nucleus. Its subcellular location is the cytoplasm. Inhibitor of E2F-dependent activation of gene expression. Binds specifically the E2 recognition site without interacting with DP proteins and prevents transcription activation by E2F/DP heterodimers. Does not bind retinoblastoma-related proteins. Acts as a growth regulator but is not associated with changes in the expression of cell cycle marker genes or in nuclear ploidy levels. Has no effect on cell proliferation, but may repress cell wall biosynthesis genes during cell elongation in differentiated cells. In Arabidopsis thaliana (Mouse-ear cress), this protein is E2F transcription factor-like E2FF (E2FF).